The primary structure comprises 399 residues: Succinate--CoA ligase [ADP-forming] subunit beta (399 aa).

Positions 9–254 (KAVLQPFGVS…TTEEDAKEIE (246 aa)) constitute an ATP-grasp domain. ATP contacts are provided by residues Lys-46, 53-55 (GRG), Glu-109, Ser-112, and Glu-117. 2 residues coordinate Mg(2+): Asn-209 and Asp-223. Substrate-binding positions include Asn-274 and 331 to 333 (GIM).

This sequence belongs to the succinate/malate CoA ligase beta subunit family. Heterotetramer of two alpha and two beta subunits. The cofactor is Mg(2+).

The catalysed reaction is succinate + ATP + CoA = succinyl-CoA + ADP + phosphate. The enzyme catalyses GTP + succinate + CoA = succinyl-CoA + GDP + phosphate. Its pathway is carbohydrate metabolism; tricarboxylic acid cycle; succinate from succinyl-CoA (ligase route): step 1/1. Functionally, succinyl-CoA synthetase functions in the citric acid cycle (TCA), coupling the hydrolysis of succinyl-CoA to the synthesis of either ATP or GTP and thus represents the only step of substrate-level phosphorylation in the TCA. The beta subunit provides nucleotide specificity of the enzyme and binds the substrate succinate, while the binding sites for coenzyme A and phosphate are found in the alpha subunit. The polypeptide is Succinate--CoA ligase [ADP-forming] subunit beta (Rhodopseudomonas palustris (strain BisA53)).